The following is a 379-amino-acid chain: Chaperone protein DnaJ (379 aa).

Positions 5–70 constitute a J domain; that stretch reads DYYELLEVSR…QKRAAYDQFG (66 aa). The CR-type zinc finger occupies 135–213; the sequence is GKEVEITVPR…CHGQGRVRES (79 aa). Residues cysteine 148, cysteine 151, cysteine 165, cysteine 168, cysteine 187, cysteine 190, cysteine 201, and cysteine 204 each coordinate Zn(2+). CXXCXGXG motif repeat units follow at residues 148-155, 165-172, 187-194, and 201-208; these read CTVCEGSG, CETCQGMG, CPTCHGEG, and CASCHGQG.

Belongs to the DnaJ family. Homodimer. It depends on Zn(2+) as a cofactor.

Its subcellular location is the cytoplasm. Functionally, participates actively in the response to hyperosmotic and heat shock by preventing the aggregation of stress-denatured proteins and by disaggregating proteins, also in an autonomous, DnaK-independent fashion. Unfolded proteins bind initially to DnaJ; upon interaction with the DnaJ-bound protein, DnaK hydrolyzes its bound ATP, resulting in the formation of a stable complex. GrpE releases ADP from DnaK; ATP binding to DnaK triggers the release of the substrate protein, thus completing the reaction cycle. Several rounds of ATP-dependent interactions between DnaJ, DnaK and GrpE are required for fully efficient folding. Also involved, together with DnaK and GrpE, in the DNA replication of plasmids through activation of initiation proteins. This chain is Chaperone protein DnaJ, found in Legionella pneumophila (strain Lens).